A 406-amino-acid chain; its full sequence is Cysteine desulfurase (406 aa).

Residue K226 is modified to N6-(pyridoxal phosphate)lysine. The active-site Cysteine persulfide intermediate is the C364.

This sequence belongs to the class-V pyridoxal-phosphate-dependent aminotransferase family. Csd subfamily. As to quaternary structure, homodimer. Interacts with SufE and the SufBCD complex composed of SufB, SufC and SufD. The interaction with SufE is required to mediate the direct transfer of the sulfur atom from the S-sulfanylcysteine. Pyridoxal 5'-phosphate serves as cofactor.

The protein localises to the cytoplasm. The catalysed reaction is (sulfur carrier)-H + L-cysteine = (sulfur carrier)-SH + L-alanine. The enzyme catalyses L-selenocysteine + AH2 = hydrogenselenide + L-alanine + A + H(+). Its pathway is cofactor biosynthesis; iron-sulfur cluster biosynthesis. In terms of biological role, cysteine desulfurases mobilize the sulfur from L-cysteine to yield L-alanine, an essential step in sulfur metabolism for biosynthesis of a variety of sulfur-containing biomolecules. Component of the suf operon, which is activated and required under specific conditions such as oxidative stress and iron limitation. Acts as a potent selenocysteine lyase in vitro, that mobilizes selenium from L-selenocysteine. Selenocysteine lyase activity is however unsure in vivo. This chain is Cysteine desulfurase, found in Salmonella agona (strain SL483).